Consider the following 316-residue polypeptide: 4-hydroxy-3-methylbut-2-enyl diphosphate reductase (316 aa).

A [4Fe-4S] cluster-binding site is contributed by Cys-12. Residues His-41 and His-74 each coordinate (2E)-4-hydroxy-3-methylbut-2-enyl diphosphate. The dimethylallyl diphosphate site is built by His-41 and His-74. Isopentenyl diphosphate is bound by residues His-41 and His-74. Cys-96 lines the [4Fe-4S] cluster pocket. His-124 is a (2E)-4-hydroxy-3-methylbut-2-enyl diphosphate binding site. His-124 provides a ligand contact to dimethylallyl diphosphate. His-124 provides a ligand contact to isopentenyl diphosphate. Glu-126 serves as the catalytic Proton donor. Residue Thr-167 coordinates (2E)-4-hydroxy-3-methylbut-2-enyl diphosphate. Cys-197 is a [4Fe-4S] cluster binding site. 4 residues coordinate (2E)-4-hydroxy-3-methylbut-2-enyl diphosphate: Ser-225, Ser-226, Asn-227, and Ser-269. Dimethylallyl diphosphate-binding residues include Ser-225, Ser-226, Asn-227, and Ser-269. Residues Ser-225, Ser-226, Asn-227, and Ser-269 each contribute to the isopentenyl diphosphate site.

This sequence belongs to the IspH family. As to quaternary structure, homodimer. [4Fe-4S] cluster serves as cofactor.

The catalysed reaction is isopentenyl diphosphate + 2 oxidized [2Fe-2S]-[ferredoxin] + H2O = (2E)-4-hydroxy-3-methylbut-2-enyl diphosphate + 2 reduced [2Fe-2S]-[ferredoxin] + 2 H(+). The enzyme catalyses dimethylallyl diphosphate + 2 oxidized [2Fe-2S]-[ferredoxin] + H2O = (2E)-4-hydroxy-3-methylbut-2-enyl diphosphate + 2 reduced [2Fe-2S]-[ferredoxin] + 2 H(+). It participates in isoprenoid biosynthesis; dimethylallyl diphosphate biosynthesis; dimethylallyl diphosphate from (2E)-4-hydroxy-3-methylbutenyl diphosphate: step 1/1. The protein operates within isoprenoid biosynthesis; isopentenyl diphosphate biosynthesis via DXP pathway; isopentenyl diphosphate from 1-deoxy-D-xylulose 5-phosphate: step 6/6. Functionally, catalyzes the conversion of 1-hydroxy-2-methyl-2-(E)-butenyl 4-diphosphate (HMBPP) into a mixture of isopentenyl diphosphate (IPP) and dimethylallyl diphosphate (DMAPP). Acts in the terminal step of the DOXP/MEP pathway for isoprenoid precursor biosynthesis. This chain is 4-hydroxy-3-methylbut-2-enyl diphosphate reductase, found in Escherichia coli (strain UTI89 / UPEC).